Here is a 512-residue protein sequence, read N- to C-terminus: Cobyric acid synthase (512 aa).

The region spanning 251–451 is the GATase cobBQ-type domain; the sequence is ALDITVIRLP…IHGLFDSANF (201 aa). Residue Cys332 is the Nucleophile of the active site. The active site involves His443.

Belongs to the CobB/CobQ family. CobQ subfamily.

The protein operates within cofactor biosynthesis; adenosylcobalamin biosynthesis. In terms of biological role, catalyzes amidations at positions B, D, E, and G on adenosylcobyrinic A,C-diamide. NH(2) groups are provided by glutamine, and one molecule of ATP is hydrogenolyzed for each amidation. This is Cobyric acid synthase from Photorhabdus laumondii subsp. laumondii (strain DSM 15139 / CIP 105565 / TT01) (Photorhabdus luminescens subsp. laumondii).